Consider the following 255-residue polypeptide: Proliferating cell nuclear antigen 2 (255 aa).

The DNA-binding element occupies 61 to 80 (HCDRNVSLGLDLKSLGKVLK).

It belongs to the PCNA family. As to quaternary structure, homotrimer. Interacts with the catalytic subunits of two DNA polymerase complexes: PolD1 in the delta complex and PolE1/DNApol-epsilon255 in the epsilon complex.

It localises to the nucleus. It is found in the chromosome. The protein resides in the cytoplasm. Likely to be an auxiliary protein of DNA polymerase delta complex and is probably involved in the control of DNA replication and repair by increasing the polymerase's processibility. May function independently of PCNA during DNA repair. This is Proliferating cell nuclear antigen 2 from Drosophila melanogaster (Fruit fly).